A 222-amino-acid polypeptide reads, in one-letter code: Riboflavin kinase (222 aa).

Residues 1–94 (METIDAEDAA…AKIFDVKDEQ (94 aa)) form an H-T-H motif-like region. The riboflavin kinase stretch occupies residues 95 to 222 (YVLTGTVMSG…ENSEVVVVIG (128 aa)). Residue 104–109 (GVGEGR) participates in CDP binding. Residues T133 and N135 each coordinate Mg(2+). FMN-binding residues include T190 and E198. Residue 203–206 (TQLR) participates in CDP binding.

This sequence belongs to the archaeal riboflavin kinase family. Requires Mg(2+) as cofactor.

The catalysed reaction is riboflavin + CTP = CDP + FMN + H(+). Its pathway is cofactor biosynthesis; FMN biosynthesis; FMN from riboflavin (CTP route): step 1/1. Its function is as follows. Catalyzes the CTP-dependent phosphorylation of riboflavin (vitamin B2) to form flavin mononucleotide (FMN). This is Riboflavin kinase (ribK) from Methanocorpusculum labreanum (strain ATCC 43576 / DSM 4855 / Z).